The primary structure comprises 673 residues: UvrABC system protein B (673 aa).

In terms of domain architecture, Helicase ATP-binding spans 29–188 (EGLNDGLAHQ…LAELQYTRND (160 aa)). Residue 42–49 (GVTGSGKT) coordinates ATP. A Beta-hairpin motif is present at residues 95–118 (YYDYYQPEAYVPSSDTFIEKDASI). In terms of domain architecture, Helicase C-terminal spans 434–600 (QVDDVLSEIH…ALNKKVGELL (167 aa)). Residues 607–632 (KPKRGKQAVKVEEKSANTYKPKSRKE) are disordered. The 36-residue stretch at 634–669 (EKELKQLEQQMRDFAKDLEFEKAAAVRDKIGQLKAV) folds into the UVR domain.

It belongs to the UvrB family. As to quaternary structure, forms a heterotetramer with UvrA during the search for lesions. Interacts with UvrC in an incision complex.

It localises to the cytoplasm. The UvrABC repair system catalyzes the recognition and processing of DNA lesions. A damage recognition complex composed of 2 UvrA and 2 UvrB subunits scans DNA for abnormalities. Upon binding of the UvrA(2)B(2) complex to a putative damaged site, the DNA wraps around one UvrB monomer. DNA wrap is dependent on ATP binding by UvrB and probably causes local melting of the DNA helix, facilitating insertion of UvrB beta-hairpin between the DNA strands. Then UvrB probes one DNA strand for the presence of a lesion. If a lesion is found the UvrA subunits dissociate and the UvrB-DNA preincision complex is formed. This complex is subsequently bound by UvrC and the second UvrB is released. If no lesion is found, the DNA wraps around the other UvrB subunit that will check the other stand for damage. This chain is UvrABC system protein B, found in Actinobacillus pleuropneumoniae serotype 5b (strain L20).